A 774-amino-acid polypeptide reads, in one-letter code: Armadillo-like helical domain-containing protein 4 (774 aa).

The signal sequence occupies residues 1–27 (MRGPIVLHICLAFCSLLLFSVATQCLA). Topologically, residues 28–714 (FPKIERRREI…KDKAGYMSGM (687 aa)) are extracellular. Over residues 41-52 (HAEKGQSDKMNT) the composition is skewed to basic and acidic residues. Disordered regions lie at residues 41–63 (HAEK…VTSK) and 97–135 (QPGQ…ERIS). The N-linked (GlcNAc...) asparagine glycan is linked to asparagine 57. Asparagine 189 carries N-linked (GlcNAc...) asparagine glycosylation. Residues 221-233 (KTEKFEADTDHRT) show a composition bias toward basic and acidic residues. Disordered stretches follow at residues 221-275 (KTEK…QPLE) and 600-669 (ASYG…PGLE). Residues 258–275 (SQMTADNTQAAATKQPLE) are compositionally biased toward polar residues. A compositionally biased stretch (acidic residues) spans 607-651 (LESEEGQEDEDEEDEEDEDEEEEDEEEDEEDKDADSLDEGLDGDT). Residues 715 to 735 (LVPVGVGIAGALFILGALYSI) form a helical membrane-spanning segment. Residues 736–774 (KVMNRRRRNGFKRHKRKQREFNSMQDRVMLLADSSEDEF) lie on the Cytoplasmic side of the membrane. Residues serine 769 and serine 770 each carry the phosphoserine modification.

As to quaternary structure, interacts with IL6ST; this interaction prevents IL6ST protein homodimerization and bridges ARMH4 with IL6R and STAT3 and therefore inhibits phosphorylation of STAT3 at 'Tyr-705'. Interacts (via cytoplasmic tail) with RICTOR; this interaction bridges ARMH4 to the mTORC2 complex and inhibits the mTORC2 kinase activity. In terms of tissue distribution, expressed in podocytes.

The protein localises to the membrane. May modulate immune response and may play a role in inflammation. Down-modulates STAT3 signaling throught direct interaction with IL6ST, resulting in the inhibition of phosphorylation of STAT3 at 'Tyr-705'. May negatively regulates AKT signaling by modulating the activity of mTORC2 complex through RICTOR interaction. The polypeptide is Armadillo-like helical domain-containing protein 4 (Homo sapiens (Human)).